A 383-amino-acid polypeptide reads, in one-letter code: tRNA-specific 2-thiouridylase MnmA (383 aa).

Residues 11–18 (GLSGGVDS) and Met-37 contribute to the ATP site. An interaction with target base in tRNA region spans residues 97-99 (NPD). Cys-102 functions as the Nucleophile in the catalytic mechanism. Cys-102 and Cys-200 are oxidised to a cystine. Gly-127 contributes to the ATP binding site. An interaction with tRNA region spans residues 150-152 (KDQ). The Cysteine persulfide intermediate role is filled by Cys-200. Positions 312–313 (RY) are interaction with tRNA. A disordered region spans residues 361 to 383 (IDTAHPADRSAPPALQTQSTEVV).

The protein belongs to the MnmA/TRMU family.

Its subcellular location is the cytoplasm. It catalyses the reaction S-sulfanyl-L-cysteinyl-[protein] + uridine(34) in tRNA + AH2 + ATP = 2-thiouridine(34) in tRNA + L-cysteinyl-[protein] + A + AMP + diphosphate + H(+). Catalyzes the 2-thiolation of uridine at the wobble position (U34) of tRNA, leading to the formation of s(2)U34. In Halorhodospira halophila (strain DSM 244 / SL1) (Ectothiorhodospira halophila (strain DSM 244 / SL1)), this protein is tRNA-specific 2-thiouridylase MnmA.